Consider the following 144-residue polypeptide: Large ribosomal subunit protein uL16 (144 aa).

This sequence belongs to the universal ribosomal protein uL16 family. In terms of assembly, part of the 50S ribosomal subunit.

Its function is as follows. Binds 23S rRNA and is also seen to make contacts with the A and possibly P site tRNAs. The polypeptide is Large ribosomal subunit protein uL16 (Lysinibacillus sphaericus (strain C3-41)).